A 367-amino-acid polypeptide reads, in one-letter code: Mitogen-activated protein kinase 12 (367 aa).

In terms of domain architecture, Protein kinase spans 27-311; it reads YRDLQPVGSG…AGEALAHPYF (285 aa). ATP-binding positions include 33-41 and lysine 56; that span reads VGSGAYGAV. The active-site Proton acceptor is aspartate 153. Phosphothreonine; by MAP2K3 and MAP2K6 is present on threonine 183. Residues 183-185 carry the TXY motif; the sequence is TGY. Phosphotyrosine is present on tyrosine 185.

Belongs to the protein kinase superfamily. CMGC Ser/Thr protein kinase family. MAP kinase subfamily. In terms of assembly, monomer. Interacts with the PDZ domain of the syntrophin SNTA1. Interacts with SH3BP5. Interacts with LIN7C, SCRIB and SYNJ2BP. Interacts with PTPN4; this interaction induces the activation of PTPN4 phosphatase activity. Mg(2+) serves as cofactor. Post-translationally, dually phosphorylated on Thr-183 and Tyr-185 by MAP2K3/MKK3 and MAP2K6/MKK6, which activates the enzyme. Ubiquitinated. Ubiquitination leads to degradation by the proteasome pathway. In terms of tissue distribution, highly expressed in skeletal muscle and heart.

The protein localises to the cytoplasm. It localises to the nucleus. The protein resides in the mitochondrion. The catalysed reaction is L-seryl-[protein] + ATP = O-phospho-L-seryl-[protein] + ADP + H(+). The enzyme catalyses L-threonyl-[protein] + ATP = O-phospho-L-threonyl-[protein] + ADP + H(+). Its activity is regulated as follows. Activated by phosphorylation on threonine and tyrosine. MAP2K3/MKK3 and MAP2K6/MKK6 are both essential for the activation of MAPK12 induced by environmental stress, whereas MAP2K6/MKK6 is the major MAPK12 activator in response to TNF-alpha. Serine/threonine kinase which acts as an essential component of the MAP kinase signal transduction pathway. MAPK12 is one of the four p38 MAPKs which play an important role in the cascades of cellular responses evoked by extracellular stimuli such as pro-inflammatory cytokines or physical stress leading to direct activation of transcription factors such as ELK1 and ATF2. Accordingly, p38 MAPKs phosphorylate a broad range of proteins and it has been estimated that they may have approximately 200 to 300 substrates each. Some of the targets are downstream kinases such as MAPKAPK2, which are activated through phosphorylation and further phosphorylate additional targets. Plays a role in myoblast differentiation and also in the down-regulation of cyclin D1 in response to hypoxia in adrenal cells suggesting MAPK12 may inhibit cell proliferation while promoting differentiation. Phosphorylates DLG1. Following osmotic shock, MAPK12 in the cell nucleus increases its association with nuclear DLG1, thereby causing dissociation of DLG1-SFPQ complexes. This function is independent of its catalytic activity and could affect mRNA processing and/or gene transcription to aid cell adaptation to osmolarity changes in the environment. Regulates UV-induced checkpoint signaling and repair of UV-induced DNA damage and G2 arrest after gamma-radiation exposure. MAPK12 is involved in the regulation of SLC2A1 expression and basal glucose uptake in L6 myotubes; and negatively regulates SLC2A4 expression and contraction-mediated glucose uptake in adult skeletal muscle. C-Jun (JUN) phosphorylation is stimulated by MAPK14 and inhibited by MAPK12, leading to a distinct AP-1 regulation. MAPK12 is required for the normal kinetochore localization of PLK1, prevents chromosomal instability and supports mitotic cell viability. MAPK12-signaling is also positively regulating the expansion of transient amplifying myogenic precursor cells during muscle growth and regeneration. The sequence is that of Mitogen-activated protein kinase 12 (MAPK12) from Homo sapiens (Human).